The primary structure comprises 218 residues: LexA repressor (218 aa).

Positions 28-48 (RAEIAAEFGFSSPNAAEEHLR) form a DNA-binding region, H-T-H motif. Residues Ser136 and Lys173 each act as for autocatalytic cleavage activity in the active site.

It belongs to the peptidase S24 family. As to quaternary structure, homodimer.

The enzyme catalyses Hydrolysis of Ala-|-Gly bond in repressor LexA.. Represses a number of genes involved in the response to DNA damage (SOS response), including recA and lexA. In the presence of single-stranded DNA, RecA interacts with LexA causing an autocatalytic cleavage which disrupts the DNA-binding part of LexA, leading to derepression of the SOS regulon and eventually DNA repair. The polypeptide is LexA repressor (Cupriavidus pinatubonensis (strain JMP 134 / LMG 1197) (Cupriavidus necator (strain JMP 134))).